We begin with the raw amino-acid sequence, 94 residues long: Defensin-7 (94 aa).

A signal peptide spans 1 to 19; the sequence is MRTLTLLSAFLLVALQAWA. Disulfide bonds link Cys65–Cys93 and Cys72–Cys92.

The protein belongs to the alpha-defensin family.

It localises to the secreted. Functionally, has antimicrobial activity. The polypeptide is Defensin-7 (DEFA7) (Pan troglodytes (Chimpanzee)).